The primary structure comprises 366 residues: L-tyrosine C(3)-methyltransferase (366 aa).

Residues 1 to 12 (MTISLENTTVGQ) show a composition bias toward polar residues. A disordered region spans residues 1–22 (MTISLENTTVGQNPAGGPPTGK). Glutamate 223 lines the S-adenosyl-L-methionine pocket.

The protein belongs to the class I-like SAM-binding methyltransferase superfamily. Cation-independent O-methyltransferase family.

It catalyses the reaction L-tyrosine + S-adenosyl-L-methionine = 3-methyl-L-tyrosine + S-adenosyl-L-homocysteine + H(+). It participates in antibiotic biosynthesis. Functionally, C-methyltransferase that mediates the methylation of tyrosine into 3-methyl-L-tyrosine (3-Me-Tyr) in biosynthesis of saframycin A, a potent antitumor antibiotic that belongs to the tetrahydroisoquinoline family. Involved in biosynthesis of 3-hydroxy-5-methyl-O-methyltyrosine (3-OH-5-Me-OMe-Tyr), a core structure of saframycin A. The polypeptide is L-tyrosine C(3)-methyltransferase (Streptomyces lavendulae).